We begin with the raw amino-acid sequence, 294 residues long: Phosphoribosylaminoimidazole-succinocarboxamide synthase (294 aa).

The protein belongs to the SAICAR synthetase family.

It catalyses the reaction 5-amino-1-(5-phospho-D-ribosyl)imidazole-4-carboxylate + L-aspartate + ATP = (2S)-2-[5-amino-1-(5-phospho-beta-D-ribosyl)imidazole-4-carboxamido]succinate + ADP + phosphate + 2 H(+). The protein operates within purine metabolism; IMP biosynthesis via de novo pathway; 5-amino-1-(5-phospho-D-ribosyl)imidazole-4-carboxamide from 5-amino-1-(5-phospho-D-ribosyl)imidazole-4-carboxylate: step 1/2. The polypeptide is Phosphoribosylaminoimidazole-succinocarboxamide synthase (Thermoplasma volcanium (strain ATCC 51530 / DSM 4299 / JCM 9571 / NBRC 15438 / GSS1)).